Here is a 379-residue protein sequence, read N- to C-terminus: Dual-specificity RNA methyltransferase RlmN (379 aa).

E90 functions as the Proton acceptor in the catalytic mechanism. The Radical SAM core domain maps to E96–D348. The cysteines at positions 103 and 353 are disulfide-linked. [4Fe-4S] cluster is bound by residues C110, C114, and C117. S-adenosyl-L-methionine contacts are provided by residues G179–E180, S211, S233–H235, and N310. The S-methylcysteine intermediate role is filled by C353.

It belongs to the radical SAM superfamily. RlmN family. The cofactor is [4Fe-4S] cluster.

The protein resides in the cytoplasm. The enzyme catalyses adenosine(2503) in 23S rRNA + 2 reduced [2Fe-2S]-[ferredoxin] + 2 S-adenosyl-L-methionine = 2-methyladenosine(2503) in 23S rRNA + 5'-deoxyadenosine + L-methionine + 2 oxidized [2Fe-2S]-[ferredoxin] + S-adenosyl-L-homocysteine. The catalysed reaction is adenosine(37) in tRNA + 2 reduced [2Fe-2S]-[ferredoxin] + 2 S-adenosyl-L-methionine = 2-methyladenosine(37) in tRNA + 5'-deoxyadenosine + L-methionine + 2 oxidized [2Fe-2S]-[ferredoxin] + S-adenosyl-L-homocysteine. Its function is as follows. Specifically methylates position 2 of adenine 2503 in 23S rRNA and position 2 of adenine 37 in tRNAs. m2A2503 modification seems to play a crucial role in the proofreading step occurring at the peptidyl transferase center and thus would serve to optimize ribosomal fidelity. The polypeptide is Dual-specificity RNA methyltransferase RlmN (Nitrosomonas europaea (strain ATCC 19718 / CIP 103999 / KCTC 2705 / NBRC 14298)).